A 218-amino-acid polypeptide reads, in one-letter code: Riboflavin kinase (218 aa).

The first 19 residues, 1-19, serve as a signal peptide directing secretion; the sequence is MFTWTIYVSLLLVLAGTFL. The Mg(2+) site is built by Thr72 and Asn74. Glu155 acts as the Nucleophile in catalysis.

This sequence belongs to the flavokinase family. Zn(2+) serves as cofactor. It depends on Mg(2+) as a cofactor.

It localises to the microsome. It is found in the mitochondrion inner membrane. The protein resides in the endoplasmic reticulum. The catalysed reaction is riboflavin + ATP = FMN + ADP + H(+). It functions in the pathway cofactor biosynthesis; FMN biosynthesis; FMN from riboflavin (ATP route): step 1/1. Functionally, catalyzes the phosphorylation of riboflavin (vitamin B2) to form flavin mononucleotide (FMN) coenzyme. The polypeptide is Riboflavin kinase (FMN1) (Saccharomyces cerevisiae (strain ATCC 204508 / S288c) (Baker's yeast)).